Reading from the N-terminus, the 354-residue chain is cAMP-dependent protein kinase catalytic subunit 2 (354 aa).

Positions 45–301 constitute a Protein kinase domain; sequence YITRAVLGNG…SSDVKSHPWF (257 aa). Residues 51–59 and Lys74 contribute to the ATP site; that span reads LGNGSFGTV. Asp168 serves as the catalytic Proton acceptor. Residues 302-354 enclose the AGC-kinase C-terminal domain; the sequence is QGVDWFGILNQEVTAPYQPTISGAEDLSNFENFEFKDRYKSRINRHPELFANF.

It belongs to the protein kinase superfamily. AGC Ser/Thr protein kinase family. cAMP subfamily. More abundant in adult body than adult head.

It carries out the reaction L-seryl-[protein] + ATP = O-phospho-L-seryl-[protein] + ADP + H(+). The catalysed reaction is L-threonyl-[protein] + ATP = O-phospho-L-threonyl-[protein] + ADP + H(+). In Drosophila melanogaster (Fruit fly), this protein is cAMP-dependent protein kinase catalytic subunit 2 (Pka-C2).